The chain runs to 202 residues: Glycerol-3-phosphate acyltransferase (202 aa).

Transmembrane regions (helical) follow at residues 11-31 (LLLFWGGIGYLLGSVPFGMVI), 60-80 (AAAAATLLLDGGKGAAAVLLA), 88-108 (AAQLAGLLAFLGHCFPVWLGF), 117-137 (FLGLMLALAWPVGIACCLTWL), and 162-182 (LLLGAPQAAVLSALLALVILW).

This sequence belongs to the PlsY family. In terms of assembly, probably interacts with PlsX.

The protein resides in the cell inner membrane. It carries out the reaction an acyl phosphate + sn-glycerol 3-phosphate = a 1-acyl-sn-glycero-3-phosphate + phosphate. It participates in lipid metabolism; phospholipid metabolism. In terms of biological role, catalyzes the transfer of an acyl group from acyl-phosphate (acyl-PO(4)) to glycerol-3-phosphate (G3P) to form lysophosphatidic acid (LPA). This enzyme utilizes acyl-phosphate as fatty acyl donor, but not acyl-CoA or acyl-ACP. The chain is Glycerol-3-phosphate acyltransferase from Ruegeria sp. (strain TM1040) (Silicibacter sp.).